A 145-amino-acid polypeptide reads, in one-letter code: Large ribosomal subunit protein uL15 (145 aa).

Positions Met-1–Gly-13 are enriched in basic residues. Residues Met-1–Trp-44 form a disordered region.

It belongs to the universal ribosomal protein uL15 family. As to quaternary structure, part of the 50S ribosomal subunit.

Its function is as follows. Binds to the 23S rRNA. In Methanobrevibacter smithii (strain ATCC 35061 / DSM 861 / OCM 144 / PS), this protein is Large ribosomal subunit protein uL15.